Consider the following 79-residue polypeptide: Putative Fis-like DNA-binding protein (79 aa).

The H-T-H motif DNA-binding region spans 55-74; it reads QSKASVMLGLNRNTLRKKLI.

It belongs to the transcriptional regulatory Fis family.

The sequence is that of Putative Fis-like DNA-binding protein from Neisseria meningitidis serogroup A / serotype 4A (strain DSM 15465 / Z2491).